Here is a 231-residue protein sequence, read N- to C-terminus: uncharacterized protein (231 aa).

An NADP(+)-binding site is contributed by 10-34 (IITGASSGIGAATAKALEKQGVKVV). Serine 140 is a substrate binding site. Tyrosine 153 (proton acceptor) is an active-site residue.

Belongs to the short-chain dehydrogenases/reductases (SDR) family.

This is an uncharacterized protein from Staphylococcus haemolyticus (strain JCSC1435).